The sequence spans 460 residues: Elongation factor 1-alpha 3 (460 aa).

The 238-residue stretch at 6-243 (KTHINIVVIG…DCIIPPQRPT (238 aa)) folds into the tr-type G domain. The G1 stretch occupies residues 15–22 (GHVDSGKS). Residues 71–75 (GITID) are G2. The interval 92-95 (DAPG) is G3. The interval 154–157 (NKMD) is G4. The G5 stretch occupies residues 195–197 (SGF). 2 positions are modified to 5-glutamyl glycerylphosphorylethanolamine: Glu302 and Glu375.

The protein belongs to the TRAFAC class translation factor GTPase superfamily. Classic translation factor GTPase family. EF-Tu/EF-1A subfamily.

It is found in the cytoplasm. In terms of biological role, this protein promotes the GTP-dependent binding of aminoacyl-tRNA to the A-site of ribosomes during protein biosynthesis. In Oscheius tipulae, this protein is Elongation factor 1-alpha 3 (eft-3).